The sequence spans 870 residues: Patatin-like phospholipase domain-containing protein NCU11180 (870 aa).

Disordered stretches follow at residues 1–24 (MADDTDNPPNIQIPAKSYGFPPEA) and 131–158 (KVIKTDRDEKRNKRGKDRKNKKPRKGVA). The span at 131–141 (KVIKTDRDEKR) shows a compositional bias: basic and acidic residues. Residues 142–155 (NKRGKDRKNKKPRK) are compositionally biased toward basic residues. Residues 183 to 203 (WPFLLFVSFWIVGLGMAYLAT) traverse the membrane as a helical segment. The interval 281–320 (EEVERELESQSQNSDSGVASGEETSNTKAGGGNNGNDKKT) is disordered. Positions 289–308 (SQSQNSDSGVASGEETSNTK) are enriched in polar residues. Residues 399 to 590 (LCLSGGATFA…RTDIPIKSLN (192 aa)) form the PNPLA domain. The GXSXG signature appears at 430 to 434 (GTSGG). Ser-432 acts as the Nucleophile in catalysis. The Proton acceptor role is filled by Asp-577. 2 disordered regions span residues 735–786 (RRET…DRRG) and 804–870 (GREG…HSRT). Positions 818–834 (TEDELTMTELEGEDDDG) are enriched in acidic residues.

Belongs to the PLPL family.

It localises to the membrane. In terms of biological role, probable lipid hydrolase. The sequence is that of Patatin-like phospholipase domain-containing protein NCU11180 from Neurospora crassa (strain ATCC 24698 / 74-OR23-1A / CBS 708.71 / DSM 1257 / FGSC 987).